Consider the following 398-residue polypeptide: S-adenosylmethionine synthase (398 aa).

Residue 136–141 (GTGSSD) participates in ATP binding.

The protein belongs to the AdoMet synthase 2 family. Mg(2+) serves as cofactor.

The enzyme catalyses L-methionine + ATP + H2O = S-adenosyl-L-methionine + phosphate + diphosphate. It participates in amino-acid biosynthesis; S-adenosyl-L-methionine biosynthesis; S-adenosyl-L-methionine from L-methionine: step 1/1. Functionally, catalyzes the formation of S-adenosylmethionine from methionine and ATP. This is S-adenosylmethionine synthase from Methanosarcina acetivorans (strain ATCC 35395 / DSM 2834 / JCM 12185 / C2A).